Reading from the N-terminus, the 915-residue chain is Isoleucine--tRNA ligase (915 aa).

The 'HIGH' region motif lies at 57–67; the sequence is PYANGNLHMGH. Glu554 is an L-isoleucyl-5'-AMP binding site. The short motif at 595–599 is the 'KMSKS' region element; it reads KMSKS. Residue Lys598 participates in ATP binding. Zn(2+) is bound by residues Cys885, Cys888, Cys905, and Cys908.

The protein belongs to the class-I aminoacyl-tRNA synthetase family. IleS type 1 subfamily. In terms of assembly, monomer. The cofactor is Zn(2+).

Its subcellular location is the cytoplasm. It carries out the reaction tRNA(Ile) + L-isoleucine + ATP = L-isoleucyl-tRNA(Ile) + AMP + diphosphate. In terms of biological role, catalyzes the attachment of isoleucine to tRNA(Ile). As IleRS can inadvertently accommodate and process structurally similar amino acids such as valine, to avoid such errors it has two additional distinct tRNA(Ile)-dependent editing activities. One activity is designated as 'pretransfer' editing and involves the hydrolysis of activated Val-AMP. The other activity is designated 'posttransfer' editing and involves deacylation of mischarged Val-tRNA(Ile). In Staphylococcus carnosus (strain TM300), this protein is Isoleucine--tRNA ligase.